A 241-amino-acid polypeptide reads, in one-letter code: Small ribosomal subunit protein uS2 (241 aa).

This sequence belongs to the universal ribosomal protein uS2 family.

The polypeptide is Small ribosomal subunit protein uS2 (Yersinia enterocolitica serotype O:8 / biotype 1B (strain NCTC 13174 / 8081)).